A 310-amino-acid chain; its full sequence is Homeobox protein knotted-1-like 2 (310 aa).

The interval 178–208 (SDDGAVSSDEELREDDDIAADDSQQRSNDRD) is disordered. A compositionally biased stretch (acidic residues) spans 185–197 (SDEELREDDDIAA). An ELK domain is found at 208-228 (DLKDQLLRKFGSHISSLKLEF). Positions 229–292 (SKKKKKGKLP…NQRKRHWKPS (64 aa)) form a DNA-binding region, homeobox; TALE-type.

The protein belongs to the TALE/KNOX homeobox family. In terms of assembly, may form heterodimeric complex with the TALE/BELL protein BEL1, BLH1 and BLH2. Interacts with OFP12 and OFP14. Interacts with BZIP30. Expressed predominantly in shoot apices of seedlings, in the receptacle and developing pistil of flowers and in axillary buds of inflorescence stems.

The protein resides in the nucleus. Functionally, may play a role in meristem function, and may be involved in maintaining cells in an undifferentiated, meristematic state. Probably binds to the DNA sequence 5'-TGAC-3'. This chain is Homeobox protein knotted-1-like 2 (KNAT2), found in Arabidopsis thaliana (Mouse-ear cress).